We begin with the raw amino-acid sequence, 248 residues long: Phycocyanobilin:ferredoxin oxidoreductase (248 aa).

Belongs to the HY2 family.

The catalysed reaction is (2R,3Z)-phycocyanobilin + 4 oxidized [2Fe-2S]-[ferredoxin] = biliverdin IXalpha + 4 reduced [2Fe-2S]-[ferredoxin] + 4 H(+). In terms of biological role, catalyzes the four-electron reduction of biliverdin IX-alpha (2-electron reduction at both the A and D rings); the reaction proceeds via an isolatable 2-electron intermediate, 181,182-dihydrobiliverdin. The chain is Phycocyanobilin:ferredoxin oxidoreductase (pcyA) from Synechocystis sp. (strain ATCC 27184 / PCC 6803 / Kazusa).